The following is a 65-amino-acid chain: Large ribosomal subunit protein eL24 (65 aa).

Zn(2+) is bound by residues Cys6, Cys9, Cys32, and Cys36. Residues Cys6 to Cys36 form a C4-type zinc finger.

It belongs to the eukaryotic ribosomal protein eL24 family. As to quaternary structure, part of the 50S ribosomal subunit. Forms a cluster with proteins L3 and L14. Zn(2+) serves as cofactor.

In terms of biological role, binds to the 23S rRNA. This is Large ribosomal subunit protein eL24 from Pyrobaculum arsenaticum (strain DSM 13514 / JCM 11321 / PZ6).